Reading from the N-terminus, the 365-residue chain is Phospho-N-acetylmuramoyl-pentapeptide-transferase (365 aa).

Helical transmembrane passes span 22-42 (YISV…LALG), 74-94 (TMGG…WGDL), 95-115 (TSIY…IGFF), 133-153 (YKFA…FYLL), 168-188 (SLYI…IING), 201-221 (GLAI…AYIE), 240-260 (LAEV…FLWF), 267-287 (VFMG…IAVM), 292-312 (LIFF…MLQV), and 342-362 (KVVI…LAAI).

This sequence belongs to the glycosyltransferase 4 family. MraY subfamily. Mg(2+) serves as cofactor.

It localises to the cell inner membrane. It catalyses the reaction UDP-N-acetyl-alpha-D-muramoyl-L-alanyl-gamma-D-glutamyl-meso-2,6-diaminopimeloyl-D-alanyl-D-alanine + di-trans,octa-cis-undecaprenyl phosphate = di-trans,octa-cis-undecaprenyl diphospho-N-acetyl-alpha-D-muramoyl-L-alanyl-D-glutamyl-meso-2,6-diaminopimeloyl-D-alanyl-D-alanine + UMP. Its pathway is cell wall biogenesis; peptidoglycan biosynthesis. Its function is as follows. Catalyzes the initial step of the lipid cycle reactions in the biosynthesis of the cell wall peptidoglycan: transfers peptidoglycan precursor phospho-MurNAc-pentapeptide from UDP-MurNAc-pentapeptide onto the lipid carrier undecaprenyl phosphate, yielding undecaprenyl-pyrophosphoryl-MurNAc-pentapeptide, known as lipid I. The chain is Phospho-N-acetylmuramoyl-pentapeptide-transferase from Francisella tularensis subsp. tularensis (strain WY96-3418).